The primary structure comprises 163 residues: Putative pre-16S rRNA nuclease (163 aa).

It belongs to the YqgF nuclease family.

It localises to the cytoplasm. In terms of biological role, could be a nuclease involved in processing of the 5'-end of pre-16S rRNA. In Roseobacter denitrificans (strain ATCC 33942 / OCh 114) (Erythrobacter sp. (strain OCh 114)), this protein is Putative pre-16S rRNA nuclease.